The sequence spans 216 residues: Somatotropin (216 aa).

The first 26 residues, 1-26 (MAAGPRNSVLLAFALLCLPWPQEVGT), serve as a signal peptide directing secretion. Zn(2+) is bound at residue His-45. A disulfide bridge links Cys-78 with Cys-189. The residue at position 131 (Ser-131) is a Phosphoserine. Glu-198 provides a ligand contact to Zn(2+). A disulfide bond links Cys-206 and Cys-214.

Belongs to the somatotropin/prolactin family.

The protein localises to the secreted. Plays an important role in growth control. Its major role in stimulating body growth is to stimulate the liver and other tissues to secrete IGF1. It stimulates both the differentiation and proliferation of myoblasts. It also stimulates amino acid uptake and protein synthesis in muscle and other tissues. This is Somatotropin (GH1) from Felis catus (Cat).